The primary structure comprises 733 residues: Catalase-peroxidase (733 aa).

The segment at methionine 1–histidine 25 is disordered. The span at proline 16 to histidine 25 shows a compositional bias: basic and acidic residues. Residues tryptophan 96–tyrosine 219 constitute a cross-link (tryptophyl-tyrosyl-methioninium (Trp-Tyr) (with M-245)). Histidine 97 serves as the catalytic Proton acceptor. A cross-link (tryptophyl-tyrosyl-methioninium (Tyr-Met) (with W-96)) is located at residues tyrosine 219–methionine 245. Residue histidine 260 participates in heme b binding.

The protein belongs to the peroxidase family. Peroxidase/catalase subfamily. Homodimer or homotetramer. It depends on heme b as a cofactor. In terms of processing, formation of the three residue Trp-Tyr-Met cross-link is important for the catalase, but not the peroxidase activity of the enzyme.

The catalysed reaction is H2O2 + AH2 = A + 2 H2O. The enzyme catalyses 2 H2O2 = O2 + 2 H2O. Bifunctional enzyme with both catalase and broad-spectrum peroxidase activity. This Chlorobium chlorochromatii (strain CaD3) protein is Catalase-peroxidase.